Here is a 122-residue protein sequence, read N- to C-terminus: Large ribosomal subunit protein uL14c (122 aa).

This sequence belongs to the universal ribosomal protein uL14 family. As to quaternary structure, part of the 50S ribosomal subunit.

It localises to the plastid. The protein resides in the chloroplast. Binds to 23S rRNA. This chain is Large ribosomal subunit protein uL14c, found in Chloranthus spicatus (Chulantree).